Consider the following 89-residue polypeptide: Small ribosomal subunit protein uS15 (89 aa).

The protein belongs to the universal ribosomal protein uS15 family. Part of the 30S ribosomal subunit. Forms a bridge to the 50S subunit in the 70S ribosome, contacting the 23S rRNA.

Its function is as follows. One of the primary rRNA binding proteins, it binds directly to 16S rRNA where it helps nucleate assembly of the platform of the 30S subunit by binding and bridging several RNA helices of the 16S rRNA. In terms of biological role, forms an intersubunit bridge (bridge B4) with the 23S rRNA of the 50S subunit in the ribosome. This is Small ribosomal subunit protein uS15 from Exiguobacterium sp. (strain ATCC BAA-1283 / AT1b).